The primary structure comprises 471 residues: Collagenase 3 (471 aa).

Residues 1 to 19 form the signal peptide; it reads MQPGVLAACLLLSWTHCWS. Residues 20 to 103 constitute a propeptide, activation peptide; sequence LPLLNSNEDD…PRCGVPDVGE (84 aa). Positions 94–101 match the Cysteine switch motif; that stretch reads PRCGVPDV. Residue cysteine 96 participates in Zn(2+) binding. Residue asparagine 117 is glycosylated (N-linked (GlcNAc...) asparagine). Aspartate 128 serves as a coordination point for Ca(2+). N-linked (GlcNAc...) asparagine glycans are attached at residues asparagine 152 and asparagine 158. Residue aspartate 162 participates in Ca(2+) binding. The Zn(2+) site is built by histidine 172 and aspartate 174. Positions 176–246 are interaction with TIMP2; the sequence is YPFDGPSGLL…GALMFPIYTY (71 aa). Residues aspartate 179, glycine 180, serine 182, and leucine 184 each coordinate Ca(2+). Zn(2+) is bound at residue histidine 187. The Ca(2+) site is built by asparagine 194, glycine 196, and aspartate 198. Histidine 200 is a Zn(2+) binding site. Positions 202, 203, and 205 each coordinate Ca(2+). Residue histidine 222 coordinates Zn(2+). Glutamate 223 is an active-site residue. Zn(2+) is bound by residues histidine 226, histidine 232, and methionine 240. Residues 263-284 are disordered; the sequence is QSLYGPGDEDPNPKHPKTPDKC. The segment at 268-471 is interaction with collagen; the sequence is PGDEDPNPKH…VMPTNSLLWC (204 aa). Basic and acidic residues predominate over residues 273-284; it reads PNPKHPKTPDKC. 4 Hemopexin repeats span residues 281–330, 331–377, 379–427, and 428–471; these read PDKC…WPEL, PNRI…GFPR, VKKI…FPGI, and GGKV…LLWC. Cysteine 284 and cysteine 471 are oxidised to a cystine. 4 residues coordinate Ca(2+): aspartate 291, isoleucine 293, aspartate 335, and alanine 337. Residue tyrosine 366 is modified to Phosphotyrosine; by PKDCC. Positions 383 and 385 each coordinate Ca(2+). The N-linked (GlcNAc...) asparagine glycan is linked to asparagine 409. Residues aspartate 432 and valine 434 each contribute to the Ca(2+) site.

This sequence belongs to the peptidase M10A family. Ca(2+) is required as a cofactor. It depends on Zn(2+) as a cofactor. In terms of processing, the proenzyme is activated by removal of the propeptide; this cleavage can be effected by other matrix metalloproteinases, such as MMP2, MMP3 and MMP14 and may involve several cleavage steps. Cleavage can also be autocatalytic, after partial maturation by another protease or after treatment with 4-aminophenylmercuric acetate (APMA) (in vitro). N-glycosylated. Post-translationally, tyrosine phosphorylated by PKDCC/VLK.

The protein resides in the secreted. It is found in the extracellular space. The protein localises to the extracellular matrix. Functionally, plays a role in the degradation of extracellular matrix proteins including fibrillar collagen, fibronectin, TNC and ACAN. Cleaves triple helical collagens, including type I, type II and type III collagen, but has the highest activity with soluble type II collagen. Can also degrade collagen type IV, type XIV and type X. May also function by activating or degrading key regulatory proteins, such as TGFB1 and CCN2. Plays a role in wound healing, tissue remodeling, cartilage degradation, bone development, bone mineralization and ossification. Required for normal embryonic bone development and ossification. Plays a role in the healing of bone fractures via endochondral ossification. Plays a role in wound healing, probably by a mechanism that involves proteolytic activation of TGFB1 and degradation of CCN2. Plays a role in keratinocyte migration during wound healing. May play a role in cell migration and in tumor cell invasion. This is Collagenase 3 (MMP13) from Oryctolagus cuniculus (Rabbit).